Consider the following 200-residue polypeptide: Dephospho-CoA kinase (200 aa).

One can recognise a DPCK domain in the interval 3–200 (KVGLTGGIGS…EELQRRLHSR (198 aa)). 11 to 16 (GSGKSS) is a binding site for ATP.

The protein belongs to the CoaE family.

Its subcellular location is the cytoplasm. The catalysed reaction is 3'-dephospho-CoA + ATP = ADP + CoA + H(+). It participates in cofactor biosynthesis; coenzyme A biosynthesis; CoA from (R)-pantothenate: step 5/5. Functionally, catalyzes the phosphorylation of the 3'-hydroxyl group of dephosphocoenzyme A to form coenzyme A. The polypeptide is Dephospho-CoA kinase (Thermobifida fusca (strain YX)).